The sequence spans 459 residues: ATP synthase subunit beta (459 aa).

148 to 155 (GGAGVGKT) contacts ATP.

This sequence belongs to the ATPase alpha/beta chains family. As to quaternary structure, F-type ATPases have 2 components, CF(1) - the catalytic core - and CF(0) - the membrane proton channel. CF(1) has five subunits: alpha(3), beta(3), gamma(1), delta(1), epsilon(1). CF(0) has three main subunits: a(1), b(2) and c(9-12). The alpha and beta chains form an alternating ring which encloses part of the gamma chain. CF(1) is attached to CF(0) by a central stalk formed by the gamma and epsilon chains, while a peripheral stalk is formed by the delta and b chains.

The protein localises to the cell inner membrane. It carries out the reaction ATP + H2O + 4 H(+)(in) = ADP + phosphate + 5 H(+)(out). Functionally, produces ATP from ADP in the presence of a proton gradient across the membrane. The catalytic sites are hosted primarily by the beta subunits. In Burkholderia mallei (strain NCTC 10229), this protein is ATP synthase subunit beta.